A 428-amino-acid polypeptide reads, in one-letter code: Gamma-glutamyl phosphate reductase (428 aa).

Belongs to the gamma-glutamyl phosphate reductase family.

The protein localises to the cytoplasm. It catalyses the reaction L-glutamate 5-semialdehyde + phosphate + NADP(+) = L-glutamyl 5-phosphate + NADPH + H(+). The protein operates within amino-acid biosynthesis; L-proline biosynthesis; L-glutamate 5-semialdehyde from L-glutamate: step 2/2. In terms of biological role, catalyzes the NADPH-dependent reduction of L-glutamate 5-phosphate into L-glutamate 5-semialdehyde and phosphate. The product spontaneously undergoes cyclization to form 1-pyrroline-5-carboxylate. The sequence is that of Gamma-glutamyl phosphate reductase from Treponema pallidum (strain Nichols).